The sequence spans 282 residues: 2-dehydro-3-deoxyphosphooctonate aldolase (282 aa).

This sequence belongs to the KdsA family.

The protein localises to the cytoplasm. The enzyme catalyses D-arabinose 5-phosphate + phosphoenolpyruvate + H2O = 3-deoxy-alpha-D-manno-2-octulosonate-8-phosphate + phosphate. It participates in carbohydrate biosynthesis; 3-deoxy-D-manno-octulosonate biosynthesis; 3-deoxy-D-manno-octulosonate from D-ribulose 5-phosphate: step 2/3. The protein operates within bacterial outer membrane biogenesis; lipopolysaccharide biosynthesis. In Shewanella baltica (strain OS185), this protein is 2-dehydro-3-deoxyphosphooctonate aldolase.